The chain runs to 181 residues: Oligoribonuclease (181 aa).

Residues 8–171 form the Exonuclease domain; that stretch reads LIWVDLEMTG…VDIQESIAEL (164 aa). Residue Tyr129 is part of the active site.

The protein belongs to the oligoribonuclease family.

It localises to the cytoplasm. Functionally, 3'-to-5' exoribonuclease specific for small oligoribonucleotides. The sequence is that of Oligoribonuclease from Shewanella loihica (strain ATCC BAA-1088 / PV-4).